The following is a 301-amino-acid chain: 4-hydroxy-tetrahydrodipicolinate synthase (301 aa).

Thr46 provides a ligand contact to pyruvate. The active-site Proton donor/acceptor is Tyr135. Lys163 acts as the Schiff-base intermediate with substrate in catalysis. Ile205 contributes to the pyruvate binding site.

This sequence belongs to the DapA family. As to quaternary structure, homotetramer; dimer of dimers.

It localises to the cytoplasm. It carries out the reaction L-aspartate 4-semialdehyde + pyruvate = (2S,4S)-4-hydroxy-2,3,4,5-tetrahydrodipicolinate + H2O + H(+). Its pathway is amino-acid biosynthesis; L-lysine biosynthesis via DAP pathway; (S)-tetrahydrodipicolinate from L-aspartate: step 3/4. Catalyzes the condensation of (S)-aspartate-beta-semialdehyde [(S)-ASA] and pyruvate to 4-hydroxy-tetrahydrodipicolinate (HTPA). The protein is 4-hydroxy-tetrahydrodipicolinate synthase of Lacticaseibacillus casei (strain BL23) (Lactobacillus casei).